The chain runs to 345 residues: Anthranilate phosphoribosyltransferase (345 aa).

5-phospho-alpha-D-ribose 1-diphosphate is bound by residues 77–79, 82–83, Thr-87, 89–92, 106–114, and Ser-118; these read TAG, GD, NVST, and KHGNRAVSG. Residue Gly-79 coordinates anthranilate. Ser-91 provides a ligand contact to Mg(2+). Asn-109 contributes to the anthranilate binding site. Arg-164 is a binding site for anthranilate. Residues Asp-223 and Glu-224 each coordinate Mg(2+).

The protein belongs to the anthranilate phosphoribosyltransferase family. As to quaternary structure, homodimer. Mg(2+) serves as cofactor.

The catalysed reaction is N-(5-phospho-beta-D-ribosyl)anthranilate + diphosphate = 5-phospho-alpha-D-ribose 1-diphosphate + anthranilate. It functions in the pathway amino-acid biosynthesis; L-tryptophan biosynthesis; L-tryptophan from chorismate: step 2/5. In terms of biological role, catalyzes the transfer of the phosphoribosyl group of 5-phosphorylribose-1-pyrophosphate (PRPP) to anthranilate to yield N-(5'-phosphoribosyl)-anthranilate (PRA). This Saccharolobus solfataricus (strain ATCC 35092 / DSM 1617 / JCM 11322 / P2) (Sulfolobus solfataricus) protein is Anthranilate phosphoribosyltransferase.